Here is a 246-residue protein sequence, read N- to C-terminus: Small ribosomal subunit protein uS2 (246 aa).

A disordered region spans residues 224 to 246; the sequence is AKQGEEEAEAAEETAPETETTTA. Acidic residues predominate over residues 229-239; sequence EEAEAAEETAP.

This sequence belongs to the universal ribosomal protein uS2 family.

This chain is Small ribosomal subunit protein uS2, found in Bacillus velezensis (strain DSM 23117 / BGSC 10A6 / LMG 26770 / FZB42) (Bacillus amyloliquefaciens subsp. plantarum).